The primary structure comprises 523 residues: MAKGEGAEQYTNTSLLQKPSPDEVKLAKHETKSRLSVCSKLCYAIGGAPYQITGCAIGFFLQIYLLDVALLDPFYASIILFVGRAWDAVTDPTVGFLVSRTPWTRFGRMMPWIVLSTPFAVLCYFLIWYVPSVDQGKVVWYLIFYCCFQTLQTCFHVPYSALTMFISTEQKERDSATAYRMTVEVLGTLIGTAIQGQIVGMANAPCISTEIDLNSTGLEVAPDVNITDPHVSLQDLRNAYMIASGVICAIYVVCAVVLFLGVKEQKDTCRVRTEPMSFFQGICMVMGHGPYAKLVMGFLFTSLAFMLLEGNFALFCIYNLGFRNDFQNVLLVIMLSATLAIPFWQWFLTKFGKKTAVYIGTTSVVPFLISVVLVPSSLAVTYIASFAAGVSVAAAFLLPWSMLPDVVDDFKVQNPESQGHEAIFYSFYVFFTKFASGVSLGVSTLSLDFAGYVTRGCTQPGEVKLTLKILVSAAPIVLIIIGLLIFISYPINEEKRQGNRKLLNEQRENEMDSETDSTELNVV.

The Cytoplasmic segment spans residues 1-34; that stretch reads MAKGEGAEQYTNTSLLQKPSPDEVKLAKHETKSR. The chain crosses the membrane as a helical span at residues 35–64; sequence LSVCSKLCYAIGGAPYQITGCAIGFFLQIY. Over 65–75 the chain is Extracellular; the sequence is LLDVALLDPFY. Residues 76–96 traverse the membrane as a helical segment; sequence ASIILFVGRAWDAVTDPTVGF. At 97 to 108 the chain is on the cytoplasmic side; sequence LVSRTPWTRFGR. The chain crosses the membrane as a helical span at residues 109 to 128; it reads MMPWIVLSTPFAVLCYFLIW. Topologically, residues 129 to 138 are extracellular; the sequence is YVPSVDQGKV. Residues 139-163 form a helical membrane-spanning segment; sequence VWYLIFYCCFQTLQTCFHVPYSALT. Residues 164-170 lie on the Cytoplasmic side of the membrane; the sequence is MFISTEQ. A helical transmembrane segment spans residues 171 to 202; the sequence is KERDSATAYRMTVEVLGTLIGTAIQGQIVGMA. Topologically, residues 203 to 226 are extracellular; it reads NAPCISTEIDLNSTGLEVAPDVNI. A disulfide bridge links Cys206 with Cys457. Asn214 and Asn225 each carry an N-linked (GlcNAc...) asparagine glycan. Residues 227–260 form a helical membrane-spanning segment; the sequence is TDPHVSLQDLRNAYMIASGVICAIYVVCAVVLFL. Residues 261–290 are Cytoplasmic-facing; that stretch reads GVKEQKDTCRVRTEPMSFFQGICMVMGHGP. A helical transmembrane segment spans residues 291 to 317; the sequence is YAKLVMGFLFTSLAFMLLEGNFALFCI. Residues 318 to 328 lie on the Extracellular side of the membrane; sequence YNLGFRNDFQN. The chain crosses the membrane as a helical span at residues 329 to 347; the sequence is VLLVIMLSATLAIPFWQWF. Over 348–351 the chain is Cytoplasmic; that stretch reads LTKF. A helical membrane pass occupies residues 352–373; it reads GKKTAVYIGTTSVVPFLISVVL. The Extracellular portion of the chain corresponds to 374–376; sequence VPS. A helical transmembrane segment spans residues 377 to 413; the sequence is SLAVTYIASFAAGVSVAAAFLLPWSMLPDVVDDFKVQ. Residues 414 to 423 are Cytoplasmic-facing; it reads NPESQGHEAI. The chain crosses the membrane as a helical span at residues 424 to 450; the sequence is FYSFYVFFTKFASGVSLGVSTLSLDFA. At 451–462 the chain is on the extracellular side; the sequence is GYVTRGCTQPGE. Residues 463 to 486 traverse the membrane as a helical segment; the sequence is VKLTLKILVSAAPIVLIIIGLLIF. Residues 487 to 523 lie on the Cytoplasmic side of the membrane; the sequence is ISYPINEEKRQGNRKLLNEQRENEMDSETDSTELNVV. The tract at residues 504–523 is disordered; the sequence is NEQRENEMDSETDSTELNVV.

The protein belongs to the major facilitator superfamily. Expressed in the developing nervous system.

It is found in the cell membrane. It localises to the endoplasmic reticulum membrane. The enzyme catalyses a 1-acyl-sn-glycero-3-phosphocholine(in) + Na(+)(in) = a 1-acyl-sn-glycero-3-phosphocholine(out) + Na(+)(out). The catalysed reaction is 1-(4Z,7Z,10Z,13Z,16Z,19Z-docosahexaenoyl)-sn-glycero-3-phosphocholine(in) + Na(+)(in) = 1-(4Z,7Z,10Z,13Z,16Z,19Z-docosahexaenoyl)-sn-glycero-3-phosphocholine(out) + Na(+)(out). It carries out the reaction 1-(9Z-octadecenoyl)-sn-glycero-3-phosphocholine(in) + Na(+)(in) = 1-(9Z-octadecenoyl)-sn-glycero-3-phosphocholine(out) + Na(+)(out). It catalyses the reaction 1-hexadecanoyl-sn-glycero-3-phosphocholine(in) + Na(+)(in) = 1-hexadecanoyl-sn-glycero-3-phosphocholine(out) + Na(+)(out). The enzyme catalyses a 1-acyl-sn-glycero-3-phosphoethanolamine(in) + Na(+)(in) = a 1-acyl-sn-glycero-3-phosphoethanolamine(out) + Na(+)(out). Sodium-dependent lysophosphatidylcholine (LPC) symporter, which plays an essential role for blood-brain barrier formation and function. Specifically expressed in endothelium of the blood-brain barrier of micro-vessels and transports LPC into the brain. Transport of LPC is essential because it constitutes the major mechanism by which docosahexaenoic acid (DHA), an omega-3 fatty acid that is essential for normal brain growth and cognitive function, enters the brain. Transports LPC carrying long-chain fatty acids such LPC oleate and LPC palmitate with a minimum acyl chain length of 14 carbons. Does not transport docosahexaenoic acid in unesterified fatty acid. The sequence is that of Sodium-dependent lysophosphatidylcholine symporter 1-B (mfsd2ab) from Danio rerio (Zebrafish).